The sequence spans 159 residues: uncharacterized protein (159 aa).

Disordered stretches follow at residues methionine 1 to alanine 23 and alanine 91 to alanine 110.

This is an uncharacterized protein from Homo sapiens (Human).